The following is a 286-amino-acid chain: Shikimate dehydrogenase (NADP(+)) (286 aa).

Shikimate-binding positions include 20 to 22 and S67; that span reads SLS. K71 functions as the Proton acceptor in the catalytic mechanism. Residues N92 and D107 each contribute to the shikimate site. NADP(+)-binding positions include 131 to 135 and A230; that span reads GGGGA. Y232 contributes to the shikimate binding site. G253 serves as a coordination point for NADP(+).

This sequence belongs to the shikimate dehydrogenase family. As to quaternary structure, homodimer.

It catalyses the reaction shikimate + NADP(+) = 3-dehydroshikimate + NADPH + H(+). Its pathway is metabolic intermediate biosynthesis; chorismate biosynthesis; chorismate from D-erythrose 4-phosphate and phosphoenolpyruvate: step 4/7. In terms of biological role, involved in the biosynthesis of the chorismate, which leads to the biosynthesis of aromatic amino acids. Catalyzes the reversible NADPH linked reduction of 3-dehydroshikimate (DHSA) to yield shikimate (SA). This chain is Shikimate dehydrogenase (NADP(+)), found in Lactococcus lactis subsp. cremoris (strain SK11).